The primary structure comprises 138 residues: Probable DNA-directed RNA polymerases I, II, and III subunit RPABC2 (138 aa).

Acidic residues-rich tracts occupy residues 1 to 27 and 35 to 46; these read MADD…VIEE and EEEDDDNNVDEN. Positions 1-46 are disordered; sequence MADDDDYQDMDNDDFVDDNEMEDVIEEEQQRPDHEEEDDDNNVDEN.

The protein belongs to the archaeal Rpo6/eukaryotic RPB6 RNA polymerase subunit family. Component of the RNA polymerase I (Pol I), RNA polymerase II (Pol II) and RNA polymerase III (Pol III) complexes consisting of at least 13, 12 and 17 subunits, respectively.

Its subcellular location is the nucleus. DNA-dependent RNA polymerases catalyze the transcription of DNA into RNA using the four ribonucleoside triphosphates as substrates. Common component of RNA polymerases I, II and III which synthesize ribosomal RNA precursors, mRNA precursors and many functional non-coding RNAs, and small RNAs, such as 5S rRNA and tRNAs, respectively. Pol II is the central component of the basal RNA polymerase II transcription machinery. Pols are composed of mobile elements that move relative to each other. In Pol II, RPB6 is part of the clamp element and together with parts of RPB1 and RPB2 forms a pocket to which the RPB4-RPB7 subcomplex binds. The polypeptide is Probable DNA-directed RNA polymerases I, II, and III subunit RPABC2 (Caenorhabditis briggsae).